The chain runs to 477 residues: C3a anaphylatoxin chemotactic receptor (477 aa).

Residues 1–23 lie on the Extracellular side of the membrane; sequence MESFDADTNSTDLHSRPLFQPQD. A glycan (N-linked (GlcNAc...) asparagine) is linked at Asn9. The helical transmembrane segment at 24–46 threads the bilayer; it reads IASMVILGLTCLLGLLGNGLVLW. Residues 47 to 57 are Cytoplasmic-facing; sequence VAGVKMKTTVN. A helical transmembrane segment spans residues 58–80; sequence TVWFLHLTLADFLCCLSLPFSLA. Topologically, residues 81–96 are extracellular; that stretch reads HLILQGHWPYGLFLCK. A disulfide bridge connects residues Cys95 and Cys172. The helical transmembrane segment at 97 to 118 threads the bilayer; that stretch reads LIPSIIILNMFASVFLLTAISL. Topologically, residues 119-139 are cytoplasmic; the sequence is DRCLIVHKPIWCQNHRNVRTA. Residues 140 to 160 traverse the membrane as a helical segment; that stretch reads FAICGCVWVVAFVMCVPVFVY. The Extracellular segment spans residues 161–333; that stretch reads RDLFIMDNRS…TPLMAITITR (173 aa). Asn168 is a glycosylation site (N-linked (GlcNAc...) asparagine). Residues Tyr174 and Tyr184 each carry the sulfotyrosine modification. N-linked (GlcNAc...) asparagine glycans are attached at residues Asn197 and Asn201. Tyr312 bears the Sulfotyrosine mark. The chain crosses the membrane as a helical span at residues 334–353; it reads LVVGFLVPFFIMVICYSLIV. Topologically, residues 354-370 are cytoplasmic; sequence FRMRKTNFTKSRNKTFR. A helical transmembrane segment spans residues 371 to 393; that stretch reads VAVAVVTVFFICWTPYHLVGVLL. At 394–410 the chain is on the extracellular side; the sequence is LITDPESSLGEAVMSWD. A helical transmembrane segment spans residues 411–431; it reads HMSIALASANSCFNPFLYALL. Residues 432 to 477 lie on the Cytoplasmic side of the membrane; the sequence is GKDFRKKARQSIKGILEAAFSEELTHSTNCTQDKASSKRNNMSTDV. Position 452 is a phosphoserine (Ser452). Phosphothreonine is present on Thr456.

This sequence belongs to the G-protein coupled receptor 1 family. In terms of assembly, interacts with VGF-derived peptide TLQP-21. In terms of tissue distribution, detected in varying levels in all tissues examined except the spleen. Especially abundant in heart and lung.

The protein localises to the cell membrane. Functionally, receptor for the chemotactic and inflammatory peptide anaphylatoxin C3a. This receptor stimulates chemotaxis, granule enzyme release and superoxide anion production. This Mus musculus (Mouse) protein is C3a anaphylatoxin chemotactic receptor (C3ar1).